Here is a 168-residue protein sequence, read N- to C-terminus: Photosystem I assembly protein Ycf3 (168 aa).

3 TPR repeats span residues 35–68, 72–105, and 120–153; these read AFTY…EIDP, SYIL…NPFL, and GEQA…TPGN.

This sequence belongs to the Ycf3 family.

It is found in the plastid. The protein resides in the chloroplast thylakoid membrane. In terms of biological role, essential for the assembly of the photosystem I (PSI) complex. May act as a chaperone-like factor to guide the assembly of the PSI subunits. The chain is Photosystem I assembly protein Ycf3 from Ranunculus macranthus (Large buttercup).